Reading from the N-terminus, the 327-residue chain is Phenylalanine--tRNA ligase alpha subunit (327 aa).

Glu-252 lines the Mg(2+) pocket.

Belongs to the class-II aminoacyl-tRNA synthetase family. Phe-tRNA synthetase alpha subunit type 1 subfamily. As to quaternary structure, tetramer of two alpha and two beta subunits. Mg(2+) serves as cofactor.

The protein resides in the cytoplasm. It carries out the reaction tRNA(Phe) + L-phenylalanine + ATP = L-phenylalanyl-tRNA(Phe) + AMP + diphosphate + H(+). This is Phenylalanine--tRNA ligase alpha subunit from Pectobacterium carotovorum subsp. carotovorum (strain PC1).